The primary structure comprises 604 residues: MVQSAPSTEAIQLPKTSESAQLKRIRHTMSHVMAMAVQKLFPKAQVTIGPWTETGFYYDFDTPEPFTEADLKAIKKEMVKIIQQKLPVVREEVSREEAQQRIEALGEPYKLEILQGLTEPITLYHLGDRWWDLCAGPHVETTAELNPKAFDLESVAGAYWRGDETKAQLQRIYGTAWETPEQLTEYKRRKEEALKRDHRKLGRELGLFLFADPVGPGLPLWTPKGTILRSTLEDFLKQEQMKRGYQSVVTPHLARVDLFKVSGHWQNYREDMFPMMAEDDEARGLEQGFVLKPMNCPFHIQIYKNELRSYRELPIRLAEFGTVYRYEQSGELGGLTRVRGFTVDDSHLFVRPDQLASEFLSVVDLILSVFKALNLKKFKARLSFRDPESDKYIGSDDVWEKAESAIQAAAETLGMDYFIGVGEAAFYGPKLDFIFQDALDREWQLGTVQVDYNLPERFDLEYVAEDGSRQRPVMIHRAPFGSLERLIGILIEEYAGDFPLWLAPEQIRLLPVTETVLDYCQQVADQLRAIGVRVQVDCSGDRLGKLIRNAEKAKIPVMAVIGAQEAESETLSIRTRATGDLGSLTVADLTKRLSSAIAEKLPHL.

The segment at 197–499 (DHRKLGRELG…LIEEYAGDFP (303 aa)) is catalytic. Zn(2+) contacts are provided by Cys-296, His-347, and His-476.

The protein belongs to the class-II aminoacyl-tRNA synthetase family. As to quaternary structure, homodimer. Zn(2+) serves as cofactor.

It is found in the cytoplasm. The enzyme catalyses tRNA(Thr) + L-threonine + ATP = L-threonyl-tRNA(Thr) + AMP + diphosphate + H(+). In terms of biological role, catalyzes the attachment of threonine to tRNA(Thr) in a two-step reaction: L-threonine is first activated by ATP to form Thr-AMP and then transferred to the acceptor end of tRNA(Thr). Also edits incorrectly charged L-seryl-tRNA(Thr). This chain is Threonine--tRNA ligase, found in Synechococcus elongatus (strain ATCC 33912 / PCC 7942 / FACHB-805) (Anacystis nidulans R2).